The sequence spans 212 residues: Adenylate kinase (212 aa).

10–15 (GAGKGT) contributes to the ATP binding site. An NMP region spans residues 30 to 59 (ALGDIFRTIIKTSTSEAELINNYVKQGELV). Residues arginine 36, 57–59 (ELV), 85–88 (GYPR), and glutamine 92 each bind AMP. Residues 122 to 160 (GRYSCKNCRKIYNSYFLQPKTDNVCDVCGSSTFDYRKDD) are LID. Arginine 123 contacts ATP. Residues cysteine 126 and cysteine 129 each coordinate Zn(2+). An ATP-binding site is contributed by 132-133 (IY). Residues cysteine 146 and cysteine 149 each coordinate Zn(2+). Positions 157 and 168 each coordinate AMP. Lysine 196 is a binding site for ATP.

It belongs to the adenylate kinase family. Monomer.

It localises to the cytoplasm. The enzyme catalyses AMP + ATP = 2 ADP. It participates in purine metabolism; AMP biosynthesis via salvage pathway; AMP from ADP: step 1/1. Catalyzes the reversible transfer of the terminal phosphate group between ATP and AMP. Plays an important role in cellular energy homeostasis and in adenine nucleotide metabolism. The sequence is that of Adenylate kinase from Rickettsia akari (strain Hartford).